Consider the following 502-residue polypeptide: Xylan O-acetyltransferase 13 (502 aa).

Over 1–53 (MWSALFSHLREVHKRSGVKEEKLIMKSPPAAGEAGCHKPQATATNKMTVLQSP) the chain is Cytoplasmic. The helical; Signal-anchor for type II membrane protein transmembrane segment at 54 to 76 (LGLRTILTSLVAFFIVVSSVSLL) threads the bilayer. The Lumenal portion of the chain corresponds to 77-502 (FDRGQDAQAQ…EFLYAYIMHK (426 aa)). 4 disulfide bridges follow: cysteine 152/cysteine 203, cysteine 174/cysteine 239, cysteine 183/cysteine 483, and cysteine 399/cysteine 479. Residues asparagine 153, asparagine 163, asparagine 189, and asparagine 209 are each glycosylated (N-linked (GlcNAc...) asparagine). A GDS motif motif is present at residues 226–228 (GDS). Serine 228 (nucleophile) is an active-site residue. N-linked (GlcNAc...) asparagine glycans are attached at residues asparagine 255, asparagine 267, asparagine 372, asparagine 401, and asparagine 442. Aspartate 478 functions as the Proton donor in the catalytic mechanism. Positions 478-481 (DCTH) match the DXXH motif motif. Residue histidine 481 is the Proton acceptor of the active site.

Belongs to the PC-esterase family. TBL subfamily.

The protein resides in the golgi apparatus membrane. In terms of biological role, xylan acetyltransferase required for 2-O- and 3-O-monoacetylation of xylosyl residues in xylan. Catalyzes the 2-O-acetylation of xylan, followed by nonenzymatic acetyl migration to the O-3 position, resulting in products that are monoacetylated at both O-2 and O-3 positions. This chain is Xylan O-acetyltransferase 13, found in Oryza sativa subsp. japonica (Rice).